The chain runs to 203 residues: GTP cyclohydrolase-2 (203 aa).

49 to 53 (RIHSE) contacts GTP. Zn(2+)-binding residues include Cys-54, Cys-65, and Cys-67. Residues Gln-70, 92–94 (EGR), and Thr-114 contribute to the GTP site. Residue Asp-126 is the Proton acceptor of the active site. Arg-128 acts as the Nucleophile in catalysis. Residues Thr-149 and Lys-154 each contribute to the GTP site.

It belongs to the GTP cyclohydrolase II family. Zn(2+) is required as a cofactor.

It catalyses the reaction GTP + 4 H2O = 2,5-diamino-6-hydroxy-4-(5-phosphoribosylamino)-pyrimidine + formate + 2 phosphate + 3 H(+). It participates in cofactor biosynthesis; riboflavin biosynthesis; 5-amino-6-(D-ribitylamino)uracil from GTP: step 1/4. Functionally, catalyzes the conversion of GTP to 2,5-diamino-6-ribosylamino-4(3H)-pyrimidinone 5'-phosphate (DARP), formate and pyrophosphate. In Shewanella oneidensis (strain ATCC 700550 / JCM 31522 / CIP 106686 / LMG 19005 / NCIMB 14063 / MR-1), this protein is GTP cyclohydrolase-2.